The chain runs to 342 residues: tRNA N6-adenosine threonylcarbamoyltransferase (342 aa).

Fe cation is bound by residues His-115 and His-119. Substrate contacts are provided by residues Ile-137–Gly-141, Asp-170, Gly-183, Asp-187, and Asn-276. Asp-304 serves as a coordination point for Fe cation.

This sequence belongs to the KAE1 / TsaD family. The cofactor is Fe(2+).

It is found in the cytoplasm. It carries out the reaction L-threonylcarbamoyladenylate + adenosine(37) in tRNA = N(6)-L-threonylcarbamoyladenosine(37) in tRNA + AMP + H(+). Required for the formation of a threonylcarbamoyl group on adenosine at position 37 (t(6)A37) in tRNAs that read codons beginning with adenine. Is involved in the transfer of the threonylcarbamoyl moiety of threonylcarbamoyl-AMP (TC-AMP) to the N6 group of A37, together with TsaE and TsaB. TsaD likely plays a direct catalytic role in this reaction. This chain is tRNA N6-adenosine threonylcarbamoyltransferase, found in Staphylococcus haemolyticus (strain JCSC1435).